The following is a 594-amino-acid chain: MATFRSEFNSVPNTYNQRLTALKKKLTTCFQQWRQQLLKLHQQQQQPKQQQQQQQHQSQHQHQQQKQKQRGSEHFYNIFVRADCSILSEKVTYLRKFKRIFTARQNLASARTAATAASAKQPVLGRCIGQEEQQLQIVASLFSSTLISKHSSSASITSSSMTIMDNTYIGVRDEYPDIDTEIRSILLANAQNGITISSIKKEYRQLTGTAFPLHDNITDFLLTIPHVTAECCESGKRIFNIKPTEHTRHLHEMILQQRQRDSVSNPIQAQEPPRLWRAQYKRRIPQHFNFNLNTSEKPPAVKISKLQPLATAAAMSNDVYQDNWKHLNNQYQLPQLNAPKNNIHSHIASNPAQLQAALPAEHHPSKHVEEYAHKRRHEYTRTPTTLSCPSTQHDSMFTINSDYDAYLLDFPLLGDDFFLYLARMELKCRFKKFEKVLQSGLCISGQTINAARQRLRLVELPEMTQIIVNIGSEDIMRGRSLVQIEHDFRLLVKEMHNRRFVPVLTTLAPLANCRHDKQTCDKVSRFNKFIRSEGRHLKVIDIHSCLINENGIVRFDCFQNGPRSVTGSSEPYVFWNKIGRQRVLHMIEENLEYY.

Positions 44-62 are enriched in low complexity; the sequence is QQQPKQQQQQQQHQSQHQH. Residues 44–68 are disordered; that stretch reads QQQPKQQQQQQQHQSQHQHQQQKQK. The HTH OST-type domain occupies 174–243; the sequence is EYPDIDTEIR…SGKRIFNIKP (70 aa).

As to quaternary structure, interacts with smaug (smg). Posterior pole of the oocyte.

Organizes the germ plasm and directs localization of the posterior determinant nanos. Oskar protein is required to keep oskar RNA and staufen protein at the posterior pole. The polypeptide is Maternal effect protein oskar (osk) (Drosophila virilis (Fruit fly)).